The chain runs to 305 residues: N-acetylmuramic acid 6-phosphate etherase (305 aa).

The 164-residue stretch at 54-217 (AVPQLERGGR…SSALMVRLGK (164 aa)) folds into the SIS domain. E82 acts as the Proton donor in catalysis. Residue E113 is part of the active site.

The protein belongs to the GCKR-like family. MurNAc-6-P etherase subfamily. As to quaternary structure, homodimer.

The enzyme catalyses N-acetyl-D-muramate 6-phosphate + H2O = N-acetyl-D-glucosamine 6-phosphate + (R)-lactate. The protein operates within amino-sugar metabolism; N-acetylmuramate degradation. Its function is as follows. Specifically catalyzes the cleavage of the D-lactyl ether substituent of MurNAc 6-phosphate, producing GlcNAc 6-phosphate and D-lactate. This Deinococcus radiodurans (strain ATCC 13939 / DSM 20539 / JCM 16871 / CCUG 27074 / LMG 4051 / NBRC 15346 / NCIMB 9279 / VKM B-1422 / R1) protein is N-acetylmuramic acid 6-phosphate etherase.